The chain runs to 283 residues: Elongation factor Ts (283 aa).

Residues 79–82 form an involved in Mg(2+) ion dislocation from EF-Tu region; it reads TDFV.

Belongs to the EF-Ts family.

The protein localises to the cytoplasm. In terms of biological role, associates with the EF-Tu.GDP complex and induces the exchange of GDP to GTP. It remains bound to the aminoacyl-tRNA.EF-Tu.GTP complex up to the GTP hydrolysis stage on the ribosome. The polypeptide is Elongation factor Ts (Shewanella putrefaciens (strain CN-32 / ATCC BAA-453)).